Here is a 63-residue protein sequence, read N- to C-terminus: DNA gyrase inhibitor YacG (63 aa).

Positions 10, 13, 29, and 33 each coordinate Zn(2+).

It belongs to the DNA gyrase inhibitor YacG family. In terms of assembly, interacts with GyrB. Zn(2+) is required as a cofactor.

Inhibits all the catalytic activities of DNA gyrase by preventing its interaction with DNA. Acts by binding directly to the C-terminal domain of GyrB, which probably disrupts DNA binding by the gyrase. This is DNA gyrase inhibitor YacG from Chromobacterium violaceum (strain ATCC 12472 / DSM 30191 / JCM 1249 / CCUG 213 / NBRC 12614 / NCIMB 9131 / NCTC 9757 / MK).